Reading from the N-terminus, the 110-residue chain is Small ribosomal subunit protein bS16 (110 aa).

Residues 87-110 form a disordered region; it reads ARQNPIKAVPRKERKAQAEAAAKG.

Belongs to the bacterial ribosomal protein bS16 family.

The sequence is that of Small ribosomal subunit protein bS16 from Bradyrhizobium sp. (strain BTAi1 / ATCC BAA-1182).